The following is a 150-amino-acid chain: 3-dehydroquinate dehydratase (150 aa).

The Proton acceptor role is filled by Tyr26. 3 residues coordinate substrate: Asn77, His83, and Asp90. The active-site Proton donor is the His103. Substrate-binding positions include 104–105 and Arg114; that span reads LS.

The protein belongs to the type-II 3-dehydroquinase family. In terms of assembly, homododecamer.

It catalyses the reaction 3-dehydroquinate = 3-dehydroshikimate + H2O. Its pathway is metabolic intermediate biosynthesis; chorismate biosynthesis; chorismate from D-erythrose 4-phosphate and phosphoenolpyruvate: step 3/7. Functionally, catalyzes a trans-dehydration via an enolate intermediate. This is 3-dehydroquinate dehydratase from Photorhabdus laumondii subsp. laumondii (strain DSM 15139 / CIP 105565 / TT01) (Photorhabdus luminescens subsp. laumondii).